Reading from the N-terminus, the 162-residue chain is Disulfide bond formation protein B (162 aa).

At 1-4 (MRII) the chain is on the cytoplasmic side. A helical transmembrane segment spans residues 5–21 (FLLIFLACAGLIGYALY). Topologically, residues 22–39 (LQLMDGLLPCPLCIFQRI) are periplasmic. A disulfide bridge links cysteine 31 with cysteine 34. Residues 40-56 (AYWLIGITALFTFIHNP) traverse the membrane as a helical segment. Over 57–62 (QSLGQH) the chain is Cytoplasmic. A helical membrane pass occupies residues 63-80 (IYYGLIILFSLAGAIVAG). Residues 81 to 136 (RQAWLIRFPEAFECGISPEEAFLNGLPLAQWWPNMFEANGDCNDGTWQFLSLTLPD) lie on the Periplasmic side of the membrane. A disulfide bridge connects residues cysteine 94 and cysteine 122. The chain crosses the membrane as a helical span at residues 137–155 (WSLLIFAAFGIIAGLLWHK). At 156-162 (KYNSINQ) the chain is on the cytoplasmic side.

Belongs to the DsbB family.

It is found in the cell inner membrane. In terms of biological role, required for disulfide bond formation in some periplasmic proteins. Acts by oxidizing the DsbA protein. In Nitrosomonas eutropha (strain DSM 101675 / C91 / Nm57), this protein is Disulfide bond formation protein B.